Reading from the N-terminus, the 475-residue chain is Ribulose bisphosphate carboxylase large chain (475 aa).

The propeptide occupies 1-2 (MS). An N-acetylproline modification is found at proline 3. Substrate is bound by residues threonine 65, asparagine 123, and threonine 173. Lysine 175 serves as the catalytic Proton acceptor. Lysine 177 contributes to the substrate binding site. Residues lysine 201, aspartate 203, and glutamate 204 each contribute to the Mg(2+) site. The residue at position 201 (lysine 201) is an N6-carboxylysine. Positions 204, 294, 295, 327, 334, 379, 381, 403, and 404 each coordinate substrate. The active-site Proton acceptor is histidine 294.

This sequence belongs to the RuBisCO large chain family. Type I subfamily. As to quaternary structure, heterohexadecamer of 8 large chains and 8 small chains. Requires Mg(2+) as cofactor. Post-translationally, the disulfide bond which can form between Cys-247 in the large chain dimeric partners within the hexadecamer appears to be associated with oxidative stress and protein turnover. The disulfide bonds reported in 1RBO may be the result of oxidation during crystallization.

The protein localises to the plastid. It localises to the chloroplast. It carries out the reaction 2 (2R)-3-phosphoglycerate + 2 H(+) = D-ribulose 1,5-bisphosphate + CO2 + H2O. The catalysed reaction is D-ribulose 1,5-bisphosphate + O2 = 2-phosphoglycolate + (2R)-3-phosphoglycerate + 2 H(+). Abscisic acid (ABA) causes weak inhibition of RuBisCO catalytic activity, but more potent inhibition of RuBisCO activation. Functionally, ruBisCO catalyzes two reactions: the carboxylation of D-ribulose 1,5-bisphosphate, the primary event in carbon dioxide fixation, as well as the oxidative fragmentation of the pentose substrate in the photorespiration process. Both reactions occur simultaneously and in competition at the same active site. Binds to abscisic acid (ABA) which has weakly inhibits carboxylation and more strongly inhibits enzyme activation. The protein is Ribulose bisphosphate carboxylase large chain of Spinacia oleracea (Spinach).